The primary structure comprises 167 residues: UPF0114 protein in repA1-repA2 intergenic region (167 aa).

The next 3 helical transmembrane spans lie at 15-35 (LMFP…LKFF), 53-73 (LVLI…LVMV), and 136-156 (IILC…MAYI).

It belongs to the UPF0114 family.

It is found in the cell membrane. The chain is UPF0114 protein in repA1-repA2 intergenic region from Buchnera aphidicola subsp. Pterocomma populeum.